The primary structure comprises 307 residues: NAD kinase 2 (307 aa).

D77 (proton acceptor) is an active-site residue. Residues 77–78 (DG), 151–152 (NE), D181, 192–197 (TAYALS), and N251 each bind NAD(+).

This sequence belongs to the NAD kinase family. It depends on a divalent metal cation as a cofactor.

It is found in the cytoplasm. It catalyses the reaction NAD(+) + ATP = ADP + NADP(+) + H(+). Functionally, involved in the regulation of the intracellular balance of NAD and NADP, and is a key enzyme in the biosynthesis of NADP. Catalyzes specifically the phosphorylation on 2'-hydroxyl of the adenosine moiety of NAD to yield NADP. The protein is NAD kinase 2 of Thermosynechococcus vestitus (strain NIES-2133 / IAM M-273 / BP-1).